A 1096-amino-acid polypeptide reads, in one-letter code: Protein spire (1096 aa).

Disordered regions lie at residues 1–79 and 184–211; these read MTEH…GNGT and VESQ…TSSV. Residues 37–51 are compositionally biased toward polar residues; that stretch reads LSTSPDSANGDAQQA. Over residues 53 to 65 the composition is skewed to basic residues; it reads THTHIISHTHSKG. 2 stretches are compositionally biased toward low complexity: residues 66 to 77 and 189 to 201; these read AAKTQTQTQNGN and QEAS…QKQP. Residues 111–366 enclose the KIND domain; that stretch reads VTLNNILDSF…RALATETIEL (256 aa). A coiled-coil region spans residues 315–340; sequence KRWDDEAEEERNDTKELEHIIETCRN. WH2 domains follow at residues 436–454 and 500–517; these read PYEI…LRKV and PREQ…LKQI. 3 disordered regions span residues 560–588, 614–656, and 693–762; these read DDSS…AHLA, QECQ…PSFT, and QSNL…LGPW. Positions 574–585 are enriched in basic residues; the sequence is HQHHQQHQPHHA. Low complexity-rich tracts occupy residues 633–645 and 714–725; these read APRQ…QAQA and DAGSQSQSGASS. Positions 737–754 are enriched in basic and acidic residues; it reads EGDHSQTTDGPPRLDEAH. Residues 780-800 form a spir-box region; the sequence is LSVTLAEIVHIRSVMTKAELE. Low complexity predominate over residues 874–894; sequence PASSSTPSPSHHAHQAHSSST. Disordered stretches follow at residues 874–899, 912–958, and 997–1021; these read PASS…NIMD, RSES…APGH, and RSME…SSTL. Residues 921 to 941 show a composition bias toward polar residues; the sequence is STVGSAPSSPKHQRSNMSTPG.

This sequence belongs to the spire family. As to quaternary structure, interacts with bsk, Rho1, Rac1, Cdc42 and wash. Interacts with capu. Post-translationally, phosphorylated by Jnk kinase (bsk).

The protein resides in the cytoplasm. Its subcellular location is the cytoskeleton. It is found in the perinuclear region. It localises to the cell membrane. The protein localises to the cytoplasmic vesicle membrane. Its function is as follows. Acts as an actin nucleation factor, remains associated with the slow-growing pointed end of the new filament. Promotes dissociation of capu from the barbed end of actin filaments. Involved in intracellular vesicle transport along actin fibers, providing a novel link between actin cytoskeleton dynamics and intracellular transport. Required for localization of determinants within the developing oocyte to the posterior pole and to the dorsal anterior corner. Links Rho family signaling and Jnk function to the actin cytoskeleton. The polypeptide is Protein spire (Drosophila pseudoobscura pseudoobscura (Fruit fly)).